The sequence spans 444 residues: Porin AaxA (444 aa).

Residues Met1–Ala19 form the signal peptide. Positions Lys42–Leu68 are disordered. Residues Gln46–Ser56 show a composition bias toward low complexity.

The protein belongs to the OprB family.

It localises to the cell outer membrane. Its function is as follows. Facilitates L-arginine uptake, as part of the AaxABC system. The arginine uptake by the bacterium in the macrophage may be a virulence factor against the host innate immune response. The sequence is that of Porin AaxA (aaxA) from Chlamydia felis (strain Fe/C-56) (Chlamydophila felis).